Reading from the N-terminus, the 104-residue chain is UPF0145 protein HCH_01985 (104 aa).

Belongs to the UPF0145 family.

The chain is UPF0145 protein HCH_01985 from Hahella chejuensis (strain KCTC 2396).